We begin with the raw amino-acid sequence, 1024 residues long: Translation initiation factor IF-2 (1024 aa).

The disordered stretch occupies residues 33-425; sequence SHMSSLEDDT…GRVKKTKTMK (393 aa). Basic and acidic residues-rich tracts occupy residues 43-62, 135-148, 167-198, and 223-263; these read EARV…DTRV, TPED…ELKP, TPAK…KETS, and SKPD…KEVR. Polar residues predominate over residues 316–325; that stretch reads EATQAPTSPQ. Over residues 332-350 the composition is skewed to basic and acidic residues; the sequence is KPADKGPARAQAHRPDTGR. A compositionally biased stretch (basic residues) spans 365-375; the sequence is RSKKKEWKKKG. Over residues 394-406 the composition is skewed to basic and acidic residues; that stretch reads SVVEGKDLYEKGR. Residues 407-423 are compositionally biased toward basic residues; the sequence is SGKKGRRKDGRVKKTKT. In terms of domain architecture, tr-type G spans 518-687; it reads SRPPVVTIMG…LLQSEVLELK (170 aa). A G1 region spans residues 527–534; sequence GHVDHGKT. A GTP-binding site is contributed by 527 to 534; the sequence is GHVDHGKT. Residues 552 to 556 are G2; sequence GITQH. Positions 573–576 are G3; sequence DTPG. GTP-binding positions include 573–577 and 627–630; these read DTPGH and NKMD. Residues 627 to 630 are G4; sequence NKMD. Residues 663–665 form a G5 region; it reads SAK.

Belongs to the TRAFAC class translation factor GTPase superfamily. Classic translation factor GTPase family. IF-2 subfamily.

The protein localises to the cytoplasm. In terms of biological role, one of the essential components for the initiation of protein synthesis. Protects formylmethionyl-tRNA from spontaneous hydrolysis and promotes its binding to the 30S ribosomal subunits. Also involved in the hydrolysis of GTP during the formation of the 70S ribosomal complex. The protein is Translation initiation factor IF-2 of Desulforapulum autotrophicum (strain ATCC 43914 / DSM 3382 / VKM B-1955 / HRM2) (Desulfobacterium autotrophicum).